A 186-amino-acid polypeptide reads, in one-letter code: Adenylate kinase (186 aa).

12 to 17 (GAGKGT) is a binding site for ATP. Positions 32-61 (STGDLLRAEVNAQSPLGKEAALIMNKGELV) are NMP. AMP contacts are provided by residues threonine 33, arginine 38, 59 to 61 (ELV), 86 to 89 (GFPR), and glutamine 93. The tract at residues 127–133 (SRGRSDD) is LID. Position 128 (arginine 128) interacts with ATP. AMP is bound by residues arginine 130 and arginine 141. Glycine 169 is an ATP binding site.

The protein belongs to the adenylate kinase family. As to quaternary structure, monomer.

The protein localises to the cytoplasm. It catalyses the reaction AMP + ATP = 2 ADP. It functions in the pathway purine metabolism; AMP biosynthesis via salvage pathway; AMP from ADP: step 1/1. Its function is as follows. Catalyzes the reversible transfer of the terminal phosphate group between ATP and AMP. Plays an important role in cellular energy homeostasis and in adenine nucleotide metabolism. This is Adenylate kinase from Prochlorococcus marinus (strain MIT 9211).